Reading from the N-terminus, the 118-residue chain is Phosphoribosyl-AMP cyclohydrolase (118 aa).

Aspartate 85 provides a ligand contact to Mg(2+). A Zn(2+)-binding site is contributed by cysteine 86. Mg(2+) contacts are provided by aspartate 87 and aspartate 89. Residues cysteine 102 and cysteine 109 each contribute to the Zn(2+) site.

It belongs to the PRA-CH family. As to quaternary structure, homodimer. The cofactor is Mg(2+). Zn(2+) serves as cofactor.

Its subcellular location is the cytoplasm. The enzyme catalyses 1-(5-phospho-beta-D-ribosyl)-5'-AMP + H2O = 1-(5-phospho-beta-D-ribosyl)-5-[(5-phospho-beta-D-ribosylamino)methylideneamino]imidazole-4-carboxamide. It participates in amino-acid biosynthesis; L-histidine biosynthesis; L-histidine from 5-phospho-alpha-D-ribose 1-diphosphate: step 3/9. In terms of biological role, catalyzes the hydrolysis of the adenine ring of phosphoribosyl-AMP. In Sulfurisphaera tokodaii (strain DSM 16993 / JCM 10545 / NBRC 100140 / 7) (Sulfolobus tokodaii), this protein is Phosphoribosyl-AMP cyclohydrolase.